A 90-amino-acid chain; its full sequence is HssA/B-like protein 4 (90 aa).

The protein belongs to the hssA/B family.

In Dictyostelium discoideum (Social amoeba), this protein is HssA/B-like protein 4 (hssl4).